The following is a 722-amino-acid chain: Dynein axonemal intermediate chain 7 (722 aa).

Basic residues predominate over residues 1 to 15 (MGPKAKKSGSKKKKV). Positions 1-20 (MGPKAKKSGSKKKKVTKAER) are disordered.

This sequence belongs to the DNAI7 family. In terms of assembly, part of the multisubunit axonemal dynein complex formed at least of two heavy chains and a number of intermediate and light chains. Associates with tubulin. Interacts with microtubule. In terms of processing, ubiquitinated. Ubiquitination leads to its degradation through the 26S proteasome. Ubiquitin-proteasome-mediated DNAI7 degradation occurs in mitosis.

It localises to the cell projection. It is found in the cilium. The protein resides in the cytoplasm. Functionally, via its association with the multisubunit axonemal dynein complex, is potentially involved in the regulation of cilia function. May act as a cell cycle regulator. This Macaca fascicularis (Crab-eating macaque) protein is Dynein axonemal intermediate chain 7.